We begin with the raw amino-acid sequence, 625 residues long: MSENLDNEGPKPMESCGQESSSALSCPTVSVPPAAPAALEEVEKEGAGAATGPGPQPGLYSYIRDDLFTSEIFKLELQNVPRHASFSDVRRFLGRFGLQPHKTKLFGQPPCAFVTFRSAAERDKALRVLHGALWKGRPLSVRLARPKADPMARRRRQEGESEPPVTRVADVVTPLWTVPYAEQLERKQLECEQVLQKLAKEIGSTNRALLPWLLEQRHKHNKACCPLEGVRPSPQQTEYRNKCEFLVGVGVDGEDNTVGCRLGKYKGGTCAVAAPFDTVHIPEATKQVVKAFQEFIRSTPYSAYDPETYTGHWKQLTVRTSRRHQAMAIAYFHPQKLSPEELAELKTSLAQHFTAGPGRASGVTCLYFVEEGQRKTPSQEGLPLEHVAGDRCIHEDLLGLTFRISPHAFFQVNTPAAEVLYTVIQDWAQLDAGSMVLDVCCGTGTIGLALARKVKRVIGVELCPEAVEDARVNAQDNELSNVEFHCGRAEDLVPTLVSRLASQHLVAILDPPRAGLHSKVILAIRRAKNLRRLLYVSCNPRAAMGNFVDLCRAPSNRVKGIPFRPVKAVAVDLFPQTPHCEMLILFERVEHPNGTGVLGPHSPPAQPTPGPPDNTLQETGTFPSS.

Disordered stretches follow at residues 1 to 37 (MSEN…AAPA) and 145 to 165 (RPKA…EPPV). A compositionally biased stretch (low complexity) spans 27–37 (PTVSVPPAAPA). In terms of domain architecture, RRM spans 73–146 (FKLELQNVPR…RPLSVRLARP (74 aa)). The stretch at 180 to 209 (YAEQLERKQLECEQVLQKLAKEIGSTNRAL) forms a coiled coil. The residue at position 378 (Ser-378) is a Phosphoserine. S-adenosyl-L-methionine is bound by residues Gln-411, Glu-461, and Asp-510. Catalysis depends on Cys-538, which acts as the Nucleophile. Glu-581 functions as the Proton acceptor in the catalytic mechanism. The disordered stretch occupies residues 594–625 (GTGVLGPHSPPAQPTPGPPDNTLQETGTFPSS). The segment covering 601-612 (HSPPAQPTPGPP) has biased composition (pro residues). Residue Ser-602 is modified to Phosphoserine. A compositionally biased stretch (polar residues) spans 614–625 (NTLQETGTFPSS).

This sequence belongs to the class I-like SAM-binding methyltransferase superfamily. RNA M5U methyltransferase family.

The protein localises to the cytoplasm. Its subcellular location is the cytosol. It carries out the reaction uridine(54) in tRNA + S-adenosyl-L-methionine = 5-methyluridine(54) in tRNA + S-adenosyl-L-homocysteine + H(+). It catalyses the reaction a uridine in mRNA + S-adenosyl-L-methionine = a 5-methyluridine in mRNA + S-adenosyl-L-homocysteine + H(+). S-adenosyl-L-methionine-dependent methyltransferase that catalyzes the formation of 5-methyl-uridine in tRNAs and some mRNAs. Mainly catalyzes the methylation of uridine at position 54 (m5U54) in cytosolic tRNAs. Also able to mediate the formation of 5-methyl-uridine in some mRNAs. This chain is tRNA (uracil-5-)-methyltransferase homolog A, found in Homo sapiens (Human).